A 510-amino-acid chain; its full sequence is ATP synthase subunit alpha (510 aa).

Glycine 170–threonine 177 contacts ATP.

It belongs to the ATPase alpha/beta chains family. In terms of assembly, F-type ATPases have 2 components, CF(1) - the catalytic core - and CF(0) - the membrane proton channel. CF(1) has five subunits: alpha(3), beta(3), gamma(1), delta(1), epsilon(1). CF(0) has three main subunits: a(1), b(2) and c(9-12). The alpha and beta chains form an alternating ring which encloses part of the gamma chain. CF(1) is attached to CF(0) by a central stalk formed by the gamma and epsilon chains, while a peripheral stalk is formed by the delta and b chains.

It localises to the cell inner membrane. The enzyme catalyses ATP + H2O + 4 H(+)(in) = ADP + phosphate + 5 H(+)(out). Produces ATP from ADP in the presence of a proton gradient across the membrane. The alpha chain is a regulatory subunit. The polypeptide is ATP synthase subunit alpha (Caulobacter sp. (strain K31)).